Here is a 174-residue protein sequence, read N- to C-terminus: Early nodulin-11 (174 aa).

The first 25 residues, 1–25, serve as a signal peptide directing secretion; that stretch reads MASFFLYSLGLVFLSALTLVPLGLA. The disordered stretch occupies residues 28–174; the sequence is SPSHNMPPNP…GNQPPPSIHF (147 aa). Residues 53 to 65 are compositionally biased toward pro residues; the sequence is YNPPIYKPPPTYK. Low complexity predominate over residues 70-83; it reads KQPINKSPNKKPLL. The span at 122 to 132 shows a compositional bias: basic residues; it reads PQKKPPSRKRP. 2 stretches are compositionally biased toward pro residues: residues 134 to 150 and 159 to 174; these read NTPPNKKPPLPKPPVNK and KRPPPYGNQPPPSIHF.

It belongs to the plant proline-rich protein superfamily. Expressed in cotyledons, leaf vasculature, stomatal guard cells and trichomes. In the embryo, expressed in embryo suspensors, the epidermis and underlying tissues of the cotyledons, hypocotyls, and radicle in maturing embryos, and the outer cell layer of the endosperm.

It is found in the secreted. The protein resides in the cell wall. In terms of biological role, involved in the infection process during the plant-rhizobium interaction. Involved in actinorhizal root nodulation. Involved in symbiotic association with the nitrogen-fixing actinomycete Frankia spp. The sequence is that of Early nodulin-11 from Medicago truncatula (Barrel medic).